The primary structure comprises 726 residues: MSTTDDTHNTLSTGKCPFHQGGHDRSAGAGTASRDWWPNQLRVDLLNQHSNRSNPLGEDFDYRKEFSKLDYSALKGDLKALLTDSQPWWPADWGSYVGLFIRMAWHGAGTYRSIDGRGGAGRGQQRFAPLNSWPDNVSLDKARRLLWPIKQKYGQKISWADLFILAGNVALENSGFRTFGFGAGREDVWEPDLDVNWGDEKAWLTHRHPEALAKAPLGATEMGLIYVNPEGPDHSGEPLSAAAAIRATFGNMGMNDEETVALIAGGHTLGKTHGAAAASHVGADPEAAPIEAQGLGWASSYGSGVGADAITSGLEVVWTQTPTQWSNYFFENLFKYEWVQTRSPAGAIQFEAVDAPDIIPDPFDPSKKRKPTMLVTDLTLRFDPEFEKISRRFLNDPQAFNEAFARAWFKLTHRDMGPKARYIGPEVPKEDLIWQDPLPQPLYQPTQEDIINLKAAIAASGLSISEMVSVAWASASTFRGGDKRGGANGARLALAPQRDWDVNAVAARVLPVLEEIQKTTNKASLADIIVLAGVVGIEQAAAAAGVSISVPFAPGRVDARQDQTDIEMFSLLEPIADGFRNYRARLDVSTTESLLIDKAQQLTLTAPEMTVLVGGMRVLGTNFDGSQNGVFTDRPGVLSTDFFANLLDMSYEWKPTDESNELFEGRDRLTGEVKYTATRADLVFGSNSVLRALAEVYACSDAHEKFVKDFVAAWVKVMNLDRFDLQ.

The segment at 1 to 33 (MSTTDDTHNTLSTGKCPFHQGGHDRSAGAGTAS) is disordered. Residues 105–226 (WHGAGTYRSI…LGATEMGLIY (122 aa)) constitute a cross-link (tryptophyl-tyrosyl-methioninium (Trp-Tyr) (with M-252)). Residue histidine 106 is the Proton acceptor of the active site. The segment at residues 226–252 (YVNPEGPDHSGEPLSAAAAIRATFGNM) is a cross-link (tryptophyl-tyrosyl-methioninium (Tyr-Met) (with W-105)). Histidine 267 is a heme b binding site.

Belongs to the peroxidase family. Peroxidase/catalase subfamily. As to quaternary structure, homodimer or homotetramer. Heme b is required as a cofactor. Post-translationally, formation of the three residue Trp-Tyr-Met cross-link is important for the catalase, but not the peroxidase activity of the enzyme.

The enzyme catalyses H2O2 + AH2 = A + 2 H2O. It carries out the reaction 2 H2O2 = O2 + 2 H2O. Functionally, bifunctional enzyme with both catalase and broad-spectrum peroxidase activity. This Salmonella paratyphi B (strain ATCC BAA-1250 / SPB7) protein is Catalase-peroxidase.